The chain runs to 428 residues: Kynureninase (428 aa).

Pyridoxal 5'-phosphate is bound by residues T104, T105, 132-135 (FPSD), D213, H216, and Y238. K239 is subject to N6-(pyridoxal phosphate)lysine. Pyridoxal 5'-phosphate-binding residues include W267 and T295.

It belongs to the kynureninase family. As to quaternary structure, homodimer. Pyridoxal 5'-phosphate serves as cofactor.

It catalyses the reaction L-kynurenine + H2O = anthranilate + L-alanine + H(+). It carries out the reaction 3-hydroxy-L-kynurenine + H2O = 3-hydroxyanthranilate + L-alanine + H(+). The protein operates within amino-acid degradation; L-kynurenine degradation; L-alanine and anthranilate from L-kynurenine: step 1/1. Its pathway is cofactor biosynthesis; NAD(+) biosynthesis; quinolinate from L-kynurenine: step 2/3. Functionally, catalyzes the cleavage of L-kynurenine (L-Kyn) and L-3-hydroxykynurenine (L-3OHKyn) into anthranilic acid (AA) and 3-hydroxyanthranilic acid (3-OHAA), respectively. This is Kynureninase from Bacillus thuringiensis subsp. konkukian (strain 97-27).